The chain runs to 281 residues: 2-dehydro-3-deoxyphosphooctonate aldolase (281 aa).

The protein belongs to the KdsA family.

It is found in the cytoplasm. It carries out the reaction D-arabinose 5-phosphate + phosphoenolpyruvate + H2O = 3-deoxy-alpha-D-manno-2-octulosonate-8-phosphate + phosphate. It participates in carbohydrate biosynthesis; 3-deoxy-D-manno-octulosonate biosynthesis; 3-deoxy-D-manno-octulosonate from D-ribulose 5-phosphate: step 2/3. The protein operates within bacterial outer membrane biogenesis; lipopolysaccharide biosynthesis. This Pseudomonas fluorescens (strain SBW25) protein is 2-dehydro-3-deoxyphosphooctonate aldolase.